Reading from the N-terminus, the 437-residue chain is GTPase Der (437 aa).

EngA-type G domains follow at residues 3 to 167 (NLVA…NKET) and 176 to 352 (PRFA…ENRT). Residues 9-16 (GRPNVGKS), 56-60 (DTGGW), 119-122 (NKTD), 182-189 (GRPNAGKS), 229-233 (DTAGI), and 294-297 (NKWD) contribute to the GTP site. The region spanning 353-437 (TKIPTARLNE…TPINIYIRQK (85 aa)) is the KH-like domain.

This sequence belongs to the TRAFAC class TrmE-Era-EngA-EngB-Septin-like GTPase superfamily. EngA (Der) GTPase family. Associates with the 50S ribosomal subunit.

In terms of biological role, GTPase that plays an essential role in the late steps of ribosome biogenesis. This is GTPase Der from Bacteroides thetaiotaomicron (strain ATCC 29148 / DSM 2079 / JCM 5827 / CCUG 10774 / NCTC 10582 / VPI-5482 / E50).